Here is a 428-residue protein sequence, read N- to C-terminus: Glutamate-1-semialdehyde 2,1-aminomutase (428 aa).

N6-(pyridoxal phosphate)lysine is present on Lys265.

The protein belongs to the class-III pyridoxal-phosphate-dependent aminotransferase family. HemL subfamily. In terms of assembly, homodimer. The cofactor is pyridoxal 5'-phosphate.

It localises to the cytoplasm. The enzyme catalyses (S)-4-amino-5-oxopentanoate = 5-aminolevulinate. Its pathway is porphyrin-containing compound metabolism; protoporphyrin-IX biosynthesis; 5-aminolevulinate from L-glutamyl-tRNA(Glu): step 2/2. This Shewanella woodyi (strain ATCC 51908 / MS32) protein is Glutamate-1-semialdehyde 2,1-aminomutase.